We begin with the raw amino-acid sequence, 385 residues long: UPF0744 protein YSC83 (385 aa).

It belongs to the UPF0744 family.

Its subcellular location is the mitochondrion outer membrane. The chain is UPF0744 protein YSC83 (YSC83) from Saccharomyces cerevisiae (strain ATCC 204508 / S288c) (Baker's yeast).